The primary structure comprises 280 residues: Rhomboid-like protein 11, chloroplastic (280 aa).

A chloroplast-targeting transit peptide spans methionine 1–phenylalanine 57. Residues serine 58–asparagine 82 lie on the Stromal side of the membrane. A helical membrane pass occupies residues glycine 83 to valine 103. The Chloroplast intermembrane segment spans residues arginine 104–alanine 117. The helical transmembrane segment at tryptophan 118–phenylalanine 140 threads the bilayer. The Stromal segment spans residues leucine 141 to asparagine 154. A helical transmembrane segment spans residues phenylalanine 155–valine 175. Residues leucine 176–arginine 178 lie on the Chloroplast intermembrane side of the membrane. The chain crosses the membrane as a helical span at residues asparagine 179–valine 199. Serine 186 (nucleophile) is an active-site residue. The Stromal portion of the chain corresponds to lysine 200 to glutamine 243. The helical transmembrane segment at threonine 244–leucine 264 threads the bilayer. The Charge relay system role is filled by histidine 250. At serine 265–serine 280 the chain is on the chloroplast intermembrane side.

It belongs to the peptidase S54 family. Homooligomer.

Its subcellular location is the plastid. The protein localises to the chloroplast inner membrane. In terms of biological role, rhomboid-type serine protease that catalyzes intramembrane proteolysis. May be involved in TIC22 processing during its import. The polypeptide is Rhomboid-like protein 11, chloroplastic (Arabidopsis thaliana (Mouse-ear cress)).